The chain runs to 250 residues: NAD(P)H-quinone oxidoreductase subunit S, chloroplastic (250 aa).

The transit peptide at 1-48 (MATSSITIPTIRTPIHRSKFLGQTHQFSTVNRSVFPPPKQQSKLYQVK) directs the protein to the chloroplast. Lys-52 participates in a covalent cross-link: Glycyl lysine isopeptide (Lys-Gly) (interchain with G-Cter in ubiquitin). Basic and acidic residues-rich tracts occupy residues 76–94 (QRNI…NETE) and 106–115 (VPEDGFEKEM). Disordered stretches follow at residues 76-163 (QRNI…KPKA) and 222-250 (REKG…EAAP). The span at 136–146 (NPPPPPPPPPA) shows a compositional bias: pro residues.

Part of the chloroplast NDH complex, composed of a mixture of chloroplast and nucleus encoded subunits. Component of the electron donor-binding subcomplex, at least composed of NDHS, NDHT and NDHU. Interacts with the NDH subcomplex A via the protein NDHT and NDHU. Post-translationally, arg-193 is the critical site for the high affinity binding of NDH to ferredoxin.

It is found in the plastid. The protein resides in the chloroplast thylakoid membrane. It catalyses the reaction a plastoquinone + NADH + (n+1) H(+)(in) = a plastoquinol + NAD(+) + n H(+)(out). The catalysed reaction is a plastoquinone + NADPH + (n+1) H(+)(in) = a plastoquinol + NADP(+) + n H(+)(out). Its function is as follows. NDH shuttles electrons from NAD(P)H:plastoquinone, via FMN and iron-sulfur (Fe-S) centers, to quinones in the photosynthetic chain and possibly in a chloroplast respiratory chain. The immediate electron acceptor for the enzyme in this species is believed to be plastoquinone. Couples the redox reaction to proton translocation, and thus conserves the redox energy in a proton gradient. Required for the efficient operation of ferredoxin-dependent plastoquinone reduction. Forms the electron donor-binding subcomplex in association with the NDHT and NDHU subunits. The polypeptide is NAD(P)H-quinone oxidoreductase subunit S, chloroplastic (Arabidopsis thaliana (Mouse-ear cress)).